Reading from the N-terminus, the 564-residue chain is Adenine deaminase (564 aa).

Belongs to the metallo-dependent hydrolases superfamily. Adenine deaminase family. Mn(2+) is required as a cofactor.

The enzyme catalyses adenine + H2O + H(+) = hypoxanthine + NH4(+). This chain is Adenine deaminase, found in Methylobacterium sp. (strain 4-46).